Consider the following 178-residue polypeptide: Cytochrome b6-f complex iron-sulfur subunit 1 (178 aa).

The helical transmembrane segment at 17-36 (LLNFLAGTTVAVTASAGAYA) threads the bilayer. The region spanning 61-161 (GNPIPASQIL…VAVVDDQIFI (101 aa)) is the Rieske domain. Residues C107, H109, C125, and H128 each contribute to the [2Fe-2S] cluster site. An intrachain disulfide couples C112 to C127.

It belongs to the Rieske iron-sulfur protein family. In terms of assembly, the 4 large subunits of the cytochrome b6-f complex are cytochrome b6, subunit IV (17 kDa polypeptide, PetD), cytochrome f and the Rieske protein, while the 4 small subunits are PetG, PetL, PetM and PetN. The complex functions as a dimer. It depends on [2Fe-2S] cluster as a cofactor.

The protein localises to the cellular thylakoid membrane. The catalysed reaction is 2 oxidized [plastocyanin] + a plastoquinol + 2 H(+)(in) = 2 reduced [plastocyanin] + a plastoquinone + 4 H(+)(out). Component of the cytochrome b6-f complex, which mediates electron transfer between photosystem II (PSII) and photosystem I (PSI), cyclic electron flow around PSI, and state transitions. This Synechocystis sp. (strain ATCC 27184 / PCC 6803 / Kazusa) protein is Cytochrome b6-f complex iron-sulfur subunit 1.